Here is a 316-residue protein sequence, read N- to C-terminus: Probable porphobilinogen deaminase (316 aa).

Cysteine 234 carries the post-translational modification S-(dipyrrolylmethanemethyl)cysteine.

Belongs to the HMBS family. It depends on dipyrromethane as a cofactor.

It catalyses the reaction 4 porphobilinogen + H2O = hydroxymethylbilane + 4 NH4(+). Its pathway is porphyrin-containing compound metabolism; protoporphyrin-IX biosynthesis; coproporphyrinogen-III from 5-aminolevulinate: step 2/4. Functionally, tetrapolymerization of the monopyrrole PBG into the hydroxymethylbilane pre-uroporphyrinogen in several discrete steps. The chain is Probable porphobilinogen deaminase from Methanosarcina mazei (strain ATCC BAA-159 / DSM 3647 / Goe1 / Go1 / JCM 11833 / OCM 88) (Methanosarcina frisia).